The following is a 1615-amino-acid chain: MMSAVMNVGKIAENGGTSQTVKSPSKSPAPNRIGRRNQETKEEKSSYTCPLCEKICTTQHQLTMHIRQHNTDTGGTDHSCSICGKSLSSASSLDRHMLVHSGERPYKCSVCGQSFTTNGNMHRHMKIHEKDPNSTASTTPPSPLKAKRLSSKRKFSQDAEMDREERTPAKKVVEDGQYGEGDRKEDDAYHCPVCFKDFFCKYALESHMETHPDNSLRCDICCITFRTHRGLLRHNAVIHKQLPRDPTGKPFIQNNPSIPAGFHDLGFTDFSCRKFPRISQVWCETNLRRCISEFHRFICETCNKAFPMLLALKLHTETHVMDQGRDKHKLQSTSLPSENPDQKAFMASLGLQYTKDIKPVKQEDDTQDEVQEMRLRALKSNLPQEPGSTGLLSLSPLEAATMGGPFSVLPPTKENIKLLSLQPFQKGFIIQPDSSIVVKPISNESAIELADIQQILKMASSAPPQISLPPLSKAPSVPVQSIFKHMPPLKPKPLVTPRTVVATSTPPPLISAQQASPGCISPSLPPPPLRLIKNSVETSSNSHLSQPGAKSSPSSQLLLQPKVEPLTQHEMKTQLEQDSIIEALLPLNMEAKIKQEVTEGDLKAIIAGAANKKAPTMRKVLYPCRFCDQVFAFSGVLRAHIRSHLGISPYQCNICDYIAADKAALIRHLRTHSGERPYICKICHYPGTVKANCERHLRKKHLKVTRKDIEKNIEYVTSNAAEMVDAFCSPDTVCKLCGEDLKHYRALRIHMRTHSGCQKKKPFECKECGTAFSAKRNCIHHILKQHLHVQEREIENYILVVDCSAQESHTDAPLLEDSTYMDCKPITPFLEPQNGFLLGTSSHVPIKLEPMGNFPMDFDEPLDFSQKSKNLSAVQVKQENLLVSSPLSFYDCSMEPIDLSIPKVLKRDNDIPGEARNQELASSVITDNAYNWQQCPLGFGANGNSEKNRAVGHPQPLKGSLHLTVPIISPALLGNSALLRPLRPKPPPQPLLPKPPVTKELPPLASIAQIISSVSSAPALLKTEAADASPKAASSSTGCDKSGNAKAKMTIVTAIQRDSNLPSDLTQACDPEPSPIADTGLTKKRGRKKGTKNKPKLSSGVDLESSGEFASIEKMLATTDTNKFSPFLQSTDNFKEESGQNGTSEDEKETPEDKLLRGKRNTYSDCPQKITCPYCPRVFSWASSLQRHMLTHTDSQADTEAPATGGEVLDLTSCEKEQPEEVSELPGSECSPQEEQKADSPPAEEDAEEKADEYEEGPEEDSVSNKSLDLNFASKLMDFKLAESDQSAGSSSQTERKHACDVCGKTFKFAGALSRHKKAHIREDRKDERSSEDESKSIQDDAGAPSMQDSGLEQEESPMDLKVVESPLDCEATGKENEESESISEGEGTERKSTEKSSDDKIPKTDEAKSTAKADKRKKVCTVCNKRFWSLQDLTRHMRSHTGERPYKCQTCERTFTLKHSLVRHQRIHQKVKNTRNHGKESDKEETQSRCGEDSENESSHSGTNPISENECDFAGVVGSHPSGTRSRKESLVGAAKDVPCEEERPSGQGATADLVEPAKSTQKQPAKDQEPRGSSELERPSGFIQDLLEMHNKKSPMNHILASADSTPQLLGVE.

The disordered stretch occupies residues 1-44 (MMSAVMNVGKIAENGGTSQTVKSPSKSPAPNRIGRRNQETKEEK). Polar residues predominate over residues 15–28 (GGTSQTVKSPSKSP). C2H2-type zinc fingers lie at residues 47-69 (YTCP…IRQH), 78-100 (HSCS…MLVH), and 106-128 (YKCS…MKIH). The tract at residues 127 to 169 (IHEKDPNSTASTTPPSPLKAKRLSSKRKFSQDAEMDREERTPA) is disordered. Residues 145–154 (KAKRLSSKRK) are compositionally biased toward basic residues. 3 C2H2-type zinc fingers span residues 189 to 211 (YHCP…METH), 216 to 239 (LRCD…AVIH), and 297 to 319 (FICE…TETH). A disordered region spans residues 511–556 (SAQQASPGCISPSLPPPPLRLIKNSVETSSNSHLSQPGAKSSPSSQ). A compositionally biased stretch (polar residues) spans 535-549 (SVETSSNSHLSQPGA). 4 consecutive C2H2-type zinc fingers follow at residues 622 to 644 (YPCR…IRSH), 650 to 672 (YQCN…LRTH), 732 to 754 (TVCK…MRTH), and 763 to 788 (FECK…QHLH). 3 disordered regions span residues 1025-1044 (AADA…KSGN), 1058-1104 (DSNL…VDLE), and 1123-1162 (KFSP…KRNT). Positions 1026-1036 (ADASPKAASSS) are enriched in low complexity. The segment covering 1082–1095 (TKKRGRKKGTKNKP) has biased composition (basic residues). Positions 1123–1132 (KFSPFLQSTD) are enriched in polar residues. Residues 1170-1192 (ITCPYCPRVFSWASSLQRHMLTH) form a C2H2-type 11 zinc finger. Disordered regions lie at residues 1214–1269 (CEKE…KSLD) and 1313–1418 (LSRH…DKRK). Residues 1242–1262 (PAEEDAEEKADEYEEGPEEDS) show a composition bias toward acidic residues. Residues 1298–1320 (HACDVCGKTFKFAGALSRHKKAH) form a C2H2-type 12 zinc finger. Basic and acidic residues-rich tracts occupy residues 1321-1339 (IRED…KSIQ) and 1388-1414 (GTER…TAKA). C2H2-type zinc fingers lie at residues 1419–1441 (KVCT…MRSH) and 1447–1469 (YKCQ…QRIH). Residues 1464-1477 (RHQRIHQKVKNTRN) show a composition bias toward basic residues. The tract at residues 1464–1585 (RHQRIHQKVK…SELERPSGFI (122 aa)) is disordered. Basic and acidic residues-rich tracts occupy residues 1478 to 1493 (HGKE…RCGE) and 1566 to 1580 (PAKD…ELER).

The protein belongs to the krueppel C2H2-type zinc-finger protein family. As to expression, broadly expressed, except in brain.

It is found in the nucleus. In terms of biological role, transcription factor that binds specifically to the RAS-responsive elements (RRE) of gene promoters. This is Ras-responsive element-binding protein 1 (RREB1) from Gallus gallus (Chicken).